A 61-amino-acid polypeptide reads, in one-letter code: Short neurotoxin 2 (61 aa).

Cystine bridges form between C3-C23, C17-C40, C42-C53, and C54-C59.

Belongs to the three-finger toxin family. Short-chain subfamily. Type I alpha-neurotoxin sub-subfamily. As to expression, expressed by the venom gland.

Its subcellular location is the secreted. Its function is as follows. Binds to muscle nicotinic acetylcholine receptor (nAChR) and inhibit acetylcholine from binding to the receptor, thereby impairing neuromuscular transmission. The chain is Short neurotoxin 2 from Naja annulifera (Banded Egyptian cobra).